The primary structure comprises 860 residues: DNA mismatch repair protein MutS (860 aa).

618 to 625 contacts ATP; sequence GPNMGGKS.

The protein belongs to the DNA mismatch repair MutS family.

This protein is involved in the repair of mismatches in DNA. It is possible that it carries out the mismatch recognition step. This protein has a weak ATPase activity. This Hahella chejuensis (strain KCTC 2396) protein is DNA mismatch repair protein MutS.